We begin with the raw amino-acid sequence, 67 residues long: Conotoxin TsMMSK-B021 (67 aa).

An N-terminal signal peptide occupies residues 1 to 20 (MMSKLGVLLTICLLLFPLTA). A propeptide spanning residues 21-50 (VQLDGDQPADLPELRAQDFAPERSPWFDPV) is cleaved from the precursor. Cystine bridges form between Cys53–Cys65, Cys54–Cys61, and Cys58–Cys64. Pro63 carries the 4-hydroxyproline modification.

It belongs to the conotoxin M superfamily. As to expression, expressed by the venom duct.

It localises to the secreted. This is Conotoxin TsMMSK-B021 from Conus tessulatus (Tessellate cone).